Here is a 419-residue protein sequence, read N- to C-terminus: UDP-N-acetylglucosamine 1-carboxyvinyltransferase (419 aa).

22-23 contacts phosphoenolpyruvate; that stretch reads KN. Arg93 contacts UDP-N-acetyl-alpha-D-glucosamine. The Proton donor role is filled by Cys117. Cys117 carries the post-translational modification 2-(S-cysteinyl)pyruvic acid O-phosphothioketal. 2 residues coordinate UDP-N-acetyl-alpha-D-glucosamine: Asp307 and Ile329.

It belongs to the EPSP synthase family. MurA subfamily.

It is found in the cytoplasm. It carries out the reaction phosphoenolpyruvate + UDP-N-acetyl-alpha-D-glucosamine = UDP-N-acetyl-3-O-(1-carboxyvinyl)-alpha-D-glucosamine + phosphate. Its pathway is cell wall biogenesis; peptidoglycan biosynthesis. Cell wall formation. Adds enolpyruvyl to UDP-N-acetylglucosamine. The protein is UDP-N-acetylglucosamine 1-carboxyvinyltransferase of Shewanella piezotolerans (strain WP3 / JCM 13877).